The following is a 203-amino-acid chain: Putative archaetidylserine decarboxylase proenzyme (203 aa).

The active-site Schiff-base intermediate with substrate; via pyruvic acid is serine 171. Position 171 is a pyruvic acid (Ser); by autocatalysis (serine 171).

The protein belongs to the phosphatidylserine decarboxylase family. PSD-A subfamily. Heterodimer of a large membrane-associated beta subunit and a small pyruvoyl-containing alpha subunit. Pyruvate is required as a cofactor. Is synthesized initially as an inactive proenzyme. Formation of the active enzyme involves a self-maturation process in which the active site pyruvoyl group is generated from an internal serine residue via an autocatalytic post-translational modification. Two non-identical subunits are generated from the proenzyme in this reaction, and the pyruvate is formed at the N-terminus of the alpha chain, which is derived from the carboxyl end of the proenzyme. The post-translation cleavage follows an unusual pathway, termed non-hydrolytic serinolysis, in which the side chain hydroxyl group of the serine supplies its oxygen atom to form the C-terminus of the beta chain, while the remainder of the serine residue undergoes an oxidative deamination to produce ammonia and the pyruvoyl prosthetic group on the alpha chain.

It is found in the cell membrane. It catalyses the reaction archaetidylserine + H(+) = archaetidylethanolamine + CO2. In terms of biological role, catalyzes the formation of archaetidylethanolamine (PtdEtn) from archaetidylserine (PtdSer). The protein is Putative archaetidylserine decarboxylase proenzyme of Methanosarcina barkeri (strain Fusaro / DSM 804).